The chain runs to 339 residues: Transmembrane protein 120B (339 aa).

Positions M1–Q77 form a coiled coil. 6 consecutive transmembrane segments (helical) span residues G102 to A124, F132 to H152, V159 to I179, G187 to P207, F270 to F290, and Q302 to L322.

The protein belongs to the TMEM120 family. Heterooligomer with TMEM120A.

The protein localises to the nucleus inner membrane. Its function is as follows. Necessary for efficient adipogenesis. Does not show ion channel activity. The protein is Transmembrane protein 120B (TMEM120B) of Bos taurus (Bovine).